The chain runs to 224 residues: Ribulose-phosphate 3-epimerase (224 aa).

Residue S8 coordinates substrate. H31, D33, and H64 together coordinate a divalent metal cation. D33 serves as the catalytic Proton acceptor. Substrate-binding positions include H64, 140 to 143 (GFGG), 173 to 175 (DGG), and 195 to 196 (GS). D173 serves as a coordination point for a divalent metal cation. The active-site Proton donor is the D173.

This sequence belongs to the ribulose-phosphate 3-epimerase family. It depends on a divalent metal cation as a cofactor.

The enzyme catalyses D-ribulose 5-phosphate = D-xylulose 5-phosphate. It participates in carbohydrate degradation. Functionally, catalyzes the reversible epimerization of D-ribulose 5-phosphate to D-xylulose 5-phosphate. In Mycobacterium leprae (strain TN), this protein is Ribulose-phosphate 3-epimerase.